Reading from the N-terminus, the 258-residue chain is 14-3-3-like protein 16R (258 aa).

Residues 238 to 258 (DMQDDGTDEIKEAAPKPDNNE) form a disordered region. Residues 245–258 (DEIKEAAPKPDNNE) show a composition bias toward basic and acidic residues.

Belongs to the 14-3-3 family.

This chain is 14-3-3-like protein 16R, found in Solanum tuberosum (Potato).